We begin with the raw amino-acid sequence, 449 residues long: Jacalin-related lectin 20 (449 aa).

Disordered stretches follow at residues 1-20 (MAQR…DDGA) and 294-314 (APPI…GDGG). An N-acetylalanine modification is found at A2. 3 consecutive Jacalin-type lectin domains span residues 2-144 (AQRL…YFTP), 147-294 (PIKQ…HFGA), and 303-446 (TEKL…TVAP).

This sequence belongs to the jacalin lectin family.

The sequence is that of Jacalin-related lectin 20 (JAL20) from Arabidopsis thaliana (Mouse-ear cress).